The primary structure comprises 498 residues: Probable malate:quinone oxidoreductase (498 aa).

It belongs to the MQO family. The cofactor is FAD.

The catalysed reaction is (S)-malate + a quinone = a quinol + oxaloacetate. It functions in the pathway carbohydrate metabolism; tricarboxylic acid cycle; oxaloacetate from (S)-malate (quinone route): step 1/1. This is Probable malate:quinone oxidoreductase from Granulibacter bethesdensis (strain ATCC BAA-1260 / CGDNIH1).